A 279-amino-acid chain; its full sequence is Diaminopimelate epimerase (279 aa).

The substrate site is built by Asn11 and Asn64. Cys73 serves as the catalytic Proton donor. Substrate contacts are provided by residues 74–75 (GN), Asn170, and 187–188 (ER). Residue Cys196 is the Proton acceptor of the active site. Residue 197-198 (GS) coordinates substrate. Residues 255–279 (NTDHQRRRHSLSRSPSGRPRLQECR) are disordered.

The protein belongs to the diaminopimelate epimerase family. As to quaternary structure, homodimer.

It localises to the cytoplasm. It carries out the reaction (2S,6S)-2,6-diaminopimelate = meso-2,6-diaminopimelate. Its pathway is amino-acid biosynthesis; L-lysine biosynthesis via DAP pathway; DL-2,6-diaminopimelate from LL-2,6-diaminopimelate: step 1/1. Its function is as follows. Catalyzes the stereoinversion of LL-2,6-diaminopimelate (L,L-DAP) to meso-diaminopimelate (meso-DAP), a precursor of L-lysine. The polypeptide is Diaminopimelate epimerase (Methanopyrus kandleri (strain AV19 / DSM 6324 / JCM 9639 / NBRC 100938)).